Reading from the N-terminus, the 207-residue chain is Outer-membrane lipoprotein carrier protein (207 aa).

The first 21 residues, 1–21 (MRAIRMLLVSALTLGSVTAYA), serve as a signal peptide directing secretion.

Belongs to the LolA family. As to quaternary structure, monomer.

The protein resides in the periplasm. In terms of biological role, participates in the translocation of lipoproteins from the inner membrane to the outer membrane. Only forms a complex with a lipoprotein if the residue after the N-terminal Cys is not an aspartate (The Asp acts as a targeting signal to indicate that the lipoprotein should stay in the inner membrane). This Pseudomonas putida (strain ATCC 47054 / DSM 6125 / CFBP 8728 / NCIMB 11950 / KT2440) protein is Outer-membrane lipoprotein carrier protein.